A 532-amino-acid polypeptide reads, in one-letter code: Nucleobase-ascorbate transporter 6 (532 aa).

Residues 1 to 24 form a disordered region; it reads MAGGGAPAPKADEPQPHPPKDQLP. Residues 10–20 show a composition bias toward basic and acidic residues; the sequence is KADEPQPHPPK. The next 12 helical transmembrane spans lie at 39 to 59, 75 to 95, 97 to 117, 137 to 157, 163 to 185, 192 to 212, 223 to 243, 289 to 309, 361 to 381, 392 to 414, 426 to 446, and 463 to 483; these read AILL…LIPT, VIQT…LFGT, LPAV…IILS, TQGA…SGLW, FLSP…EFGF, IEIG…LPHV, FAVI…TVGG, FAMM…FVAV, VGSR…SILG, APII…LSFL, FILG…NEYT, and DMVN…AFFL.

This sequence belongs to the nucleobase:cation symporter-2 (NCS2) (TC 2.A.40) family. As to expression, expressed in the apical region of cotyledons 4 days after imbibition (DAI). Expressed in the whole vasculature at 12 DAI. Expressed in the root central cylinder and lateral root primordia. Expressed in the vasculature of sepals, filaments, carpels and developing siliques.

It is found in the membrane. This chain is Nucleobase-ascorbate transporter 6 (NAT6), found in Arabidopsis thaliana (Mouse-ear cress).